Here is a 132-residue protein sequence, read N- to C-terminus: Small ribosomal subunit protein uS8 (132 aa).

It belongs to the universal ribosomal protein uS8 family. Part of the 30S ribosomal subunit. Contacts proteins S5 and S12.

Its function is as follows. One of the primary rRNA binding proteins, it binds directly to 16S rRNA central domain where it helps coordinate assembly of the platform of the 30S subunit. The sequence is that of Small ribosomal subunit protein uS8 from Bacillus licheniformis (strain ATCC 14580 / DSM 13 / JCM 2505 / CCUG 7422 / NBRC 12200 / NCIMB 9375 / NCTC 10341 / NRRL NRS-1264 / Gibson 46).